The following is a 691-amino-acid chain: Elongation factor G (691 aa).

Residues 8-282 form the tr-type G domain; sequence ERVRNIGIAA…AVVDYLPAPI (275 aa). GTP-binding positions include 17 to 24, 81 to 85, and 135 to 138; these read AHIDAGKT, DTPGH, and NKMD.

The protein belongs to the TRAFAC class translation factor GTPase superfamily. Classic translation factor GTPase family. EF-G/EF-2 subfamily.

The protein resides in the cytoplasm. In terms of biological role, catalyzes the GTP-dependent ribosomal translocation step during translation elongation. During this step, the ribosome changes from the pre-translocational (PRE) to the post-translocational (POST) state as the newly formed A-site-bound peptidyl-tRNA and P-site-bound deacylated tRNA move to the P and E sites, respectively. Catalyzes the coordinated movement of the two tRNA molecules, the mRNA and conformational changes in the ribosome. In Prochlorococcus marinus subsp. pastoris (strain CCMP1986 / NIES-2087 / MED4), this protein is Elongation factor G.